Here is a 228-residue protein sequence, read N- to C-terminus: Urease subunit gamma/beta (228 aa).

Residues 1–101 (MQLTERERDK…LVTVHDPIRG (101 aa)) form a urease gamma region. The tract at residues 102–228 (AASRRVAGEY…ARAAGFGGAQ (127 aa)) is urease beta.

This sequence in the N-terminal section; belongs to the urease gamma subunit family. The protein in the C-terminal section; belongs to the urease beta subunit family. As to quaternary structure, heterohexamer of 3 UreC (alpha) and 3 UreAB (gamma/beta) subunits.

It is found in the cytoplasm. It carries out the reaction urea + 2 H2O + H(+) = hydrogencarbonate + 2 NH4(+). It participates in nitrogen metabolism; urea degradation; CO(2) and NH(3) from urea (urease route): step 1/1. This chain is Urease subunit gamma/beta, found in Deinococcus radiodurans (strain ATCC 13939 / DSM 20539 / JCM 16871 / CCUG 27074 / LMG 4051 / NBRC 15346 / NCIMB 9279 / VKM B-1422 / R1).